The following is a 1395-amino-acid chain: G-protein coupled receptor-associated sorting protein 1 (1395 aa).

Disordered regions lie at residues 1-25 (MTGAEIESGAQVKPEKKPGEEVVGG), 45-83 (QIMPGARPKNKSKVMPGASTKVETSAVGGARPKSKAKAI), and 269-288 (TNTWSGPREDPNSRSRFRSK). The segment covering 269 to 281 (TNTWSGPREDPNS) has biased composition (basic and acidic residues). The residue at position 297 (Ser297) is a Phosphoserine. The disordered stretch occupies residues 446–469 (SMGTGASSKSRPRTDGERIGDSLF). Residues 457–469 (PRTDGERIGDSLF) are compositionally biased toward basic and acidic residues. 2 positions are modified to phosphoserine: Ser631 and Ser899. Positions 899–1395 (SETEEETIFG…QNDPEGDQEN (497 aa)) are OPRD1-binding.

This sequence belongs to the GPRASP family. As to quaternary structure, interacts with cytoplasmic tails of a variety of G-protein coupled receptors such as D2 dopamine receptor/DRD2, delta opioid receptor/OPRD1, beta-2 adrenergic receptor/ADRB2 and D4 dopamine receptor/DRD4. Interacts with PER1. Interacts with BECN2; the interaction is direct. In terms of tissue distribution, expressed in the brain, with lower expression in medulla, spinal cord and substantia nigra.

It is found in the cytoplasm. In terms of biological role, modulates lysosomal sorting and functional down-regulation of a variety of G-protein coupled receptors. Targets receptors for degradation in lysosomes via its interaction with BECN2. This is G-protein coupled receptor-associated sorting protein 1 (GPRASP1) from Homo sapiens (Human).